We begin with the raw amino-acid sequence, 746 residues long: Ferric enterobactin receptor (746 aa).

A signal peptide spans 1–25 (MSSRALPAVPFLLLSSCLLANAVHA). The short motif at 39 to 44 (QTVVAT) is the TonB box element. The 128-residue stretch at 47 to 174 (EETKQAPGVS…AGGVVNIITK (128 aa)) folds into the TBDR plug domain. Disordered stretches follow at residues 82–102 (VNLT…IDIR), 235–254 (GHES…GREG), and 397–424 (QKLD…KNRS). Residues 84–98 (LTGNSSSGQRGNNRQ) show a composition bias toward polar residues. Residues 179–746 (ETHGNLSVYS…TFYTSLTASF (568 aa)) enclose the TBDR beta-barrel domain. The segment covering 402–411 (PSSNTQNTEE) has biased composition (polar residues). The short motif at 729–746 (ATYNEPGRTFYTSLTASF) is the TonB C-terminal box element.

This sequence belongs to the TonB-dependent receptor family.

It localises to the cell outer membrane. Its function is as follows. Specific receptor for the siderophore ferric enterobactin. The polypeptide is Ferric enterobactin receptor (pfeA) (Pseudomonas aeruginosa (strain ATCC 15692 / DSM 22644 / CIP 104116 / JCM 14847 / LMG 12228 / 1C / PRS 101 / PAO1)).